The chain runs to 85 residues: Cytochrome c6 (85 aa).

The heme c site is built by C14, C17, H18, and M58.

It belongs to the cytochrome c family. PetJ subfamily. Monomer. Post-translationally, binds 1 heme c group covalently per subunit.

It is found in the cellular thylakoid lumen. Its function is as follows. Functions as an electron carrier between membrane-bound cytochrome b6-f and photosystem I in oxygenic photosynthesis. In Leptolyngbya boryana (Plectonema boryanum), this protein is Cytochrome c6 (petJ).